The following is a 369-amino-acid chain: MLSYQMMRSKLIGSKEALDNFQFVTINGKVIFNEKDKVVRIARVYSQVVKSAIKPLFDGKSVDELTKEFYNVLPNYVYLETALKQAKTIVEGLLEREEERGEIIHARIRKFWFGSRGNKSDRGNRNMKFRVLEDRVLIKVRDPWNKEWIFGKAYFGKEYLPLLKELEDLAQRKEEGYGALVSFKEKSMIHLQIPLWLYLKHFSLPKPTGYGLIAGFDLNSDRLNVVVINKDGKVITTRTFWYSDVTRPGFPKVKARALRLNALSNSLEFLSRIGVDYVVFEDLFLVKRRKFIKSKSGNRKISKFAKKQLLIHGVIKSLRFGFNVVLVNPKGTTNSGEHDRVMREKGFDKHTASAYLIALKGLGMLNDIK.

To A.pernix APE1276 and APE1804.

This is an uncharacterized protein from Saccharolobus solfataricus (strain ATCC 35092 / DSM 1617 / JCM 11322 / P2) (Sulfolobus solfataricus).